Here is a 262-residue protein sequence, read N- to C-terminus: 14-3-3-like protein A (262 aa).

Positions Asp-240–Ser-262 are disordered. The segment covering Asp-247–Ser-262 has biased composition (basic and acidic residues).

This sequence belongs to the 14-3-3 family.

In Hordeum vulgare (Barley), this protein is 14-3-3-like protein A.